The primary structure comprises 177 residues: Translation initiation factor IF-3 (177 aa).

The protein belongs to the IF-3 family. Monomer.

It is found in the cytoplasm. IF-3 binds to the 30S ribosomal subunit and shifts the equilibrium between 70S ribosomes and their 50S and 30S subunits in favor of the free subunits, thus enhancing the availability of 30S subunits on which protein synthesis initiation begins. The protein is Translation initiation factor IF-3 of Rhizobium meliloti (strain 1021) (Ensifer meliloti).